The chain runs to 138 residues: Cysteine desulfuration protein SufE (138 aa).

Residue C51 is the Cysteine persulfide intermediate of the active site.

This sequence belongs to the SufE family. Homodimer. Interacts with SufS.

The protein localises to the cytoplasm. Its pathway is cofactor biosynthesis; iron-sulfur cluster biosynthesis. In terms of biological role, participates in cysteine desulfuration mediated by SufS. Cysteine desulfuration mobilizes sulfur from L-cysteine to yield L-alanine and constitutes an essential step in sulfur metabolism for biosynthesis of a variety of sulfur-containing biomolecules. Functions as a sulfur acceptor for SufS, by mediating the direct transfer of the sulfur atom from the S-sulfanylcysteine of SufS, an intermediate product of cysteine desulfuration process. In Salmonella arizonae (strain ATCC BAA-731 / CDC346-86 / RSK2980), this protein is Cysteine desulfuration protein SufE.